Reading from the N-terminus, the 180-residue chain is Large ribosomal subunit protein uL6 (180 aa).

The protein belongs to the universal ribosomal protein uL6 family. Part of the 50S ribosomal subunit.

In terms of biological role, this protein binds to the 23S rRNA, and is important in its secondary structure. It is located near the subunit interface in the base of the L7/L12 stalk, and near the tRNA binding site of the peptidyltransferase center. This chain is Large ribosomal subunit protein uL6, found in Picrophilus torridus (strain ATCC 700027 / DSM 9790 / JCM 10055 / NBRC 100828 / KAW 2/3).